A 303-amino-acid chain; its full sequence is HTH-type transcriptional regulator LysG (303 aa).

The 57-residue stretch at 6–62 folds into the HTH lysR-type domain; sequence LDGPQLAALAAVVELGSFDAAAERLHVTPSAVSQRIKSLEQQVGQVLVVREKPCRAT. The H-T-H motif DNA-binding region spans 23 to 42; that stretch reads FDAAAERLHVTPSAVSQRIK.

Belongs to the LysR transcriptional regulatory family. Homodimer.

Positively regulates the expression of the exporter LysE and represses its own expression. The protein is HTH-type transcriptional regulator LysG of Mycobacterium bovis (strain ATCC BAA-935 / AF2122/97).